Consider the following 364-residue polypeptide: Putative agmatine deiminase 1 (364 aa).

Cys356 serves as the catalytic Amidino-cysteine intermediate.

This sequence belongs to the agmatine deiminase family.

It carries out the reaction agmatine + H2O = N-carbamoylputrescine + NH4(+). The chain is Putative agmatine deiminase 1 from Listeria monocytogenes serotype 4b (strain F2365).